A 509-amino-acid chain; its full sequence is Ethanolamine-phosphate phospho-lyase (509 aa).

Position 279 is an N6-(pyridoxal phosphate)lysine (lysine 279). The span at glutamate 451–threonine 474 shows a compositional bias: basic and acidic residues. The disordered stretch occupies residues glutamate 451–threonine 509.

This sequence belongs to the class-III pyridoxal-phosphate-dependent aminotransferase family. Homotetramer. Pyridoxal 5'-phosphate is required as a cofactor.

The protein localises to the mitochondrion. It carries out the reaction phosphoethanolamine + H2O = acetaldehyde + NH4(+) + phosphate. Catalyzes the pyridoxal-phosphate-dependent breakdown of phosphoethanolamine, converting it to ammonia, inorganic phosphate and acetaldehyde. The polypeptide is Ethanolamine-phosphate phospho-lyase (etnppl) (Xenopus laevis (African clawed frog)).